The following is a 60-amino-acid chain: 5-hydroxytryptamine receptor 2B (60 aa).

Residues 1 to 4 (VLCP) lie on the Extracellular side of the membrane. The chain crosses the membrane as a helical span at residues 5-26 (AWLFLDVLFSTASIMHLCAISV). Residues Asp10 and Thr15 each contribute to the ergotamine site. A DRY motif; important for ligand-induced conformation changes motif is present at residues 27-29 (DRY). Residues 27 to 46 (DRYIAIKKPIQANQYNSRAT) lie on the Cytoplasmic side of the membrane. A helical transmembrane segment spans residues 47 to 60 (AFIKITVVWLISIG).

Belongs to the G-protein coupled receptor 1 family. Interacts (via C-terminus) with MPDZ. Detected in aorta, renal artery, jugular vein, vena cava and femoral vein.

It is found in the cell membrane. Its subcellular location is the synapse. It localises to the synaptosome. Functionally, G-protein coupled receptor for 5-hydroxytryptamine (serotonin). Also functions as a receptor for various ergot alkaloid derivatives and psychoactive substances. Ligand binding causes a conformation change that triggers signaling via guanine nucleotide-binding proteins (G proteins) and modulates the activity of downstream effectors. HTR2B is coupled to G(q)/G(11) G alpha proteins and activates phospholipase C-beta, releasing diacylglycerol (DAG) and inositol 1,4,5-trisphosphate (IP3) second messengers that modulate the activity of phosphatidylinositol 3-kinase and promote the release of Ca(2+) ions from intracellular stores, respectively. Beta-arrestin family members inhibit signaling via G proteins and mediate activation of alternative signaling pathways. Plays a role in the regulation of dopamine and 5-hydroxytryptamine release, 5-hydroxytryptamine uptake and in the regulation of extracellular dopamine and 5-hydroxytryptamine levels, and thereby affects neural activity. May play a role in the perception of pain. Plays a role in the regulation of behavior, including impulsive behavior. Required for normal proliferation of embryonic cardiac myocytes and normal heart development. Protects cardiomyocytes against apoptosis. Plays a role in the adaptation of pulmonary arteries to chronic hypoxia. Plays a role in vasoconstriction. Required for normal osteoblast function and proliferation, and for maintaining normal bone density. Required for normal proliferation of the interstitial cells of Cajal in the intestine. This is 5-hydroxytryptamine receptor 2B (HTR2B) from Sus scrofa (Pig).